A 105-amino-acid chain; its full sequence is Ig lambda-1 chain C region (105 aa).

Residues 6 to 100 (PSVTLFPPSS…EGHTVEKSLS (95 aa)) form the Ig-like domain. Residues cysteine 27 and cysteine 86 are joined by a disulfide bond.

The chain is Ig lambda-1 chain C region from Mus musculus (Mouse).